We begin with the raw amino-acid sequence, 523 residues long: GMP synthase [glutamine-hydrolyzing] (523 aa).

A Glutamine amidotransferase type-1 domain is found at 8 to 205 (KILILDFGSQ…VVNICGCTTN (198 aa)). The active-site Nucleophile is the C85. Active-site residues include H179 and E181. Positions 206-398 (WTPENIIEDA…LGLPAEMLNR (193 aa)) constitute a GMPS ATP-PPase domain. 233 to 239 (SGGVDSS) is an ATP binding site.

Homodimer.

It catalyses the reaction XMP + L-glutamine + ATP + H2O = GMP + L-glutamate + AMP + diphosphate + 2 H(+). It participates in purine metabolism; GMP biosynthesis; GMP from XMP (L-Gln route): step 1/1. In terms of biological role, catalyzes the synthesis of GMP from XMP. This is GMP synthase [glutamine-hydrolyzing] from Mannheimia succiniciproducens (strain KCTC 0769BP / MBEL55E).